The primary structure comprises 152 residues: Endoribonuclease YbeY (152 aa).

Residues H113, H117, and H123 each contribute to the Zn(2+) site.

It belongs to the endoribonuclease YbeY family. Zn(2+) serves as cofactor.

The protein resides in the cytoplasm. Single strand-specific metallo-endoribonuclease involved in late-stage 70S ribosome quality control and in maturation of the 3' terminus of the 16S rRNA. The protein is Endoribonuclease YbeY of Pseudoalteromonas atlantica (strain T6c / ATCC BAA-1087).